Reading from the N-terminus, the 62-residue chain is Large ribosomal subunit protein bL28 (62 aa).

This sequence belongs to the bacterial ribosomal protein bL28 family.

The chain is Large ribosomal subunit protein bL28 from Thermoanaerobacter sp. (strain X514).